Here is a 990-residue protein sequence, read N- to C-terminus: Leucine--tRNA ligase (990 aa).

The short motif at Pro-74–His-85 is the 'HIGH' region element. Residues Leu-573–Ser-602 are disordered. The short motif at Lys-763–Ser-767 is the 'KMSKS' region element. Residue Lys-766 participates in ATP binding.

The protein belongs to the class-I aminoacyl-tRNA synthetase family.

Its subcellular location is the cytoplasm. The catalysed reaction is tRNA(Leu) + L-leucine + ATP = L-leucyl-tRNA(Leu) + AMP + diphosphate. This chain is Leucine--tRNA ligase, found in Bifidobacterium adolescentis (strain ATCC 15703 / DSM 20083 / NCTC 11814 / E194a).